Reading from the N-terminus, the 207-residue chain is uncharacterized protein (207 aa).

To M.leprae ML1660.

This is an uncharacterized protein from Mycobacterium tuberculosis (strain CDC 1551 / Oshkosh).